Here is a 692-residue protein sequence, read N- to C-terminus: MAREFSLAKTRNIGIMAHVDAGKTTTTERILYYTGKIHKIGETHEGASQMDWMAQEQERGITITSAATTAQWDGHRVNIIDTPGHVDFTIEVQRSLRVLDGAVTVLDAQSGVEPQTETVWRQATEYRVPRIVFANKMDKIGADFLYSVSTLHDRLQANAHPIQLPIGSEDDFTGIIDLIKMKAEIYTNDLGTDIREEDIPAEYVDQANEYREKLVEAVAETDEELMMKYLEGEEITNEELMAGIRKATINVEFFPVLCGSAFKNKGVQLMLDAVIDYLPSPLDIPAIKGVNPDTDAEETRPASDEEPFAALAFKIMTDPFVGRLTFFRVYSGVLQSGSYVMNTSKGKRERIGRILQMHANTRQEIETVYSGDIAAAVGLKNTTTGDSLTDEKAQVILESIEVPEPVIQLMVEPKSKADQDKMGVALQKLAEEDPTFRVETNVETGETVIAGMGELHLDVLVDRMKREFKVEANVGAPQVSYRETFRASTQARGFFKRQSGGKGQFGDVWIEFTPNEEGKGFEFENAIVGGVVPREFIPAVEKGLIESMANGVLAGYPLVDVKAKLYDGSYHDVDSSETAFKIAASLALKEAAKSAQPSILEPMMLVTITAPEDNLGDVMGHVTARRGRVDGMEARGNIQVVRAYVPLAEMFGYATILRSATQGRGTFMMVFDHYEDVPKSVQEEIIKKNHGE.

Positions 8–282 (AKTRNIGIMA…AVIDYLPSPL (275 aa)) constitute a tr-type G domain. GTP contacts are provided by residues 17–24 (AHVDAGKT), 81–85 (DTPGH), and 135–138 (NKMD).

The protein belongs to the TRAFAC class translation factor GTPase superfamily. Classic translation factor GTPase family. EF-G/EF-2 subfamily.

The protein localises to the cytoplasm. In terms of biological role, catalyzes the GTP-dependent ribosomal translocation step during translation elongation. During this step, the ribosome changes from the pre-translocational (PRE) to the post-translocational (POST) state as the newly formed A-site-bound peptidyl-tRNA and P-site-bound deacylated tRNA move to the P and E sites, respectively. Catalyzes the coordinated movement of the two tRNA molecules, the mRNA and conformational changes in the ribosome. This Streptococcus uberis (strain ATCC BAA-854 / 0140J) protein is Elongation factor G.